We begin with the raw amino-acid sequence, 198 residues long: Peptidyl-tRNA hydrolase (198 aa).

Tyr-14 is a tRNA binding site. The active-site Proton acceptor is His-19. Residues Tyr-64, Asn-66, and Asn-113 each contribute to the tRNA site.

It belongs to the PTH family. Monomer.

Its subcellular location is the cytoplasm. The catalysed reaction is an N-acyl-L-alpha-aminoacyl-tRNA + H2O = an N-acyl-L-amino acid + a tRNA + H(+). In terms of biological role, hydrolyzes ribosome-free peptidyl-tRNAs (with 1 or more amino acids incorporated), which drop off the ribosome during protein synthesis, or as a result of ribosome stalling. Functionally, catalyzes the release of premature peptidyl moieties from peptidyl-tRNA molecules trapped in stalled 50S ribosomal subunits, and thus maintains levels of free tRNAs and 50S ribosomes. This is Peptidyl-tRNA hydrolase from Acidobacterium capsulatum (strain ATCC 51196 / DSM 11244 / BCRC 80197 / JCM 7670 / NBRC 15755 / NCIMB 13165 / 161).